The primary structure comprises 30 residues: Cyclotide hyen-D (30 aa).

Residues 1 to 30 (GFPCGESCVYIPCFTAAIGCSCKSKVCYKN) constitute a cross-link (cyclopeptide (Gly-Asn)). Disulfide bonds link cysteine 4/cysteine 20, cysteine 8/cysteine 22, and cysteine 13/cysteine 27.

In terms of processing, this is a cyclic peptide. As to expression, detected in stems (at protein level).

Functionally, probably participates in a plant defense mechanism. Has strong cytotoxic activity against HUVEC cells (LC(50)= 0.58 uM) and various cancer cells including HeLa (LC(50)= 0.48 uM), MCF-7 and K562. Also displays some hemolytic activity. Binds to and induces leakage in phospholipd membranes, particularly ones containing 1-palmitoyl-2-oleophosphatidylethanolamine (POPE). The polypeptide is Cyclotide hyen-D (Pigea enneasperma (Spade flower)).